The sequence spans 278 residues: Malonyl-[acyl-carrier protein] O-methyltransferase (278 aa).

Belongs to the methyltransferase superfamily.

It carries out the reaction malonyl-[ACP] + S-adenosyl-L-methionine = malonyl-[ACP] methyl ester + S-adenosyl-L-homocysteine. It participates in cofactor biosynthesis; biotin biosynthesis. Converts the free carboxyl group of a malonyl-thioester to its methyl ester by transfer of a methyl group from S-adenosyl-L-methionine (SAM). It allows to synthesize pimeloyl-ACP via the fatty acid synthetic pathway. This chain is Malonyl-[acyl-carrier protein] O-methyltransferase, found in Brevibacillus brevis (strain 47 / JCM 6285 / NBRC 100599).